We begin with the raw amino-acid sequence, 87 residues long: Small ribosomal subunit protein bS20 (87 aa).

The segment at 1–22 (MANIKSQIKRIGTNKKAQERNK) is disordered.

This sequence belongs to the bacterial ribosomal protein bS20 family.

Functionally, binds directly to 16S ribosomal RNA. The polypeptide is Small ribosomal subunit protein bS20 (Clavibacter sepedonicus (Clavibacter michiganensis subsp. sepedonicus)).